Here is a 188-residue protein sequence, read N- to C-terminus: GMP synthase [glutamine-hydrolyzing] subunit A (188 aa).

Residues 2-188 (KVAVIYFGGQ…FKNFIKICRK (187 aa)) enclose the Glutamine amidotransferase type-1 domain. The active-site Nucleophile is the Cys-79. Active-site residues include His-166 and Glu-168.

Heterodimer composed of a glutamine amidotransferase subunit (A) and a GMP-binding subunit (B).

It catalyses the reaction XMP + L-glutamine + ATP + H2O = GMP + L-glutamate + AMP + diphosphate + 2 H(+). It functions in the pathway purine metabolism; GMP biosynthesis; GMP from XMP (L-Gln route): step 1/1. Catalyzes the synthesis of GMP from XMP. This is GMP synthase [glutamine-hydrolyzing] subunit A from Sulfolobus acidocaldarius (strain ATCC 33909 / DSM 639 / JCM 8929 / NBRC 15157 / NCIMB 11770).